The chain runs to 360 residues: Peptide chain release factor 1 (360 aa).

An N5-methylglutamine modification is found at Gln237.

Belongs to the prokaryotic/mitochondrial release factor family. Methylated by PrmC. Methylation increases the termination efficiency of RF1.

The protein localises to the cytoplasm. Peptide chain release factor 1 directs the termination of translation in response to the peptide chain termination codons UAG and UAA. In Pseudomonas putida (strain ATCC 47054 / DSM 6125 / CFBP 8728 / NCIMB 11950 / KT2440), this protein is Peptide chain release factor 1.